The primary structure comprises 345 residues: Meiotically up-regulated gene 97 protein (345 aa).

The next 2 membrane-spanning stretches (helical) occupy residues 292-312 and 319-329; these read MWVL…GLWM and FAHGMLLNLGI.

It is found in the membrane. Required for correct meiotic chromosome segregation. Appears to also have role in sporulation. This is Meiotically up-regulated gene 97 protein (mug97) from Schizosaccharomyces pombe (strain 972 / ATCC 24843) (Fission yeast).